A 126-amino-acid polypeptide reads, in one-letter code: Glycine cleavage system H protein (126 aa).

In terms of domain architecture, Lipoyl-binding spans 23 to 104; it reads TLTVGITDHA…PYESWLFKIK (82 aa). At lysine 64 the chain carries N6-lipoyllysine.

Belongs to the GcvH family. As to quaternary structure, the glycine cleavage system is composed of four proteins: P, T, L and H. It depends on (R)-lipoate as a cofactor.

The glycine cleavage system catalyzes the degradation of glycine. The H protein shuttles the methylamine group of glycine from the P protein to the T protein. The sequence is that of Glycine cleavage system H protein from Paraburkholderia phytofirmans (strain DSM 17436 / LMG 22146 / PsJN) (Burkholderia phytofirmans).